The chain runs to 983 residues: Glycine dehydrogenase (decarboxylating) (983 aa).

An N6-(pyridoxal phosphate)lysine modification is found at Lys-726.

The protein belongs to the GcvP family. In terms of assembly, the glycine cleavage system is composed of four proteins: P, T, L and H. Pyridoxal 5'-phosphate serves as cofactor.

The enzyme catalyses N(6)-[(R)-lipoyl]-L-lysyl-[glycine-cleavage complex H protein] + glycine + H(+) = N(6)-[(R)-S(8)-aminomethyldihydrolipoyl]-L-lysyl-[glycine-cleavage complex H protein] + CO2. In terms of biological role, the glycine cleavage system catalyzes the degradation of glycine. The P protein binds the alpha-amino group of glycine through its pyridoxal phosphate cofactor; CO(2) is released and the remaining methylamine moiety is then transferred to the lipoamide cofactor of the H protein. This Synechocystis sp. (strain ATCC 27184 / PCC 6803 / Kazusa) protein is Glycine dehydrogenase (decarboxylating).